A 612-amino-acid chain; its full sequence is Dihydroxy-acid dehydratase (612 aa).

Mg(2+) is bound at residue aspartate 81. Cysteine 122 lines the [2Fe-2S] cluster pocket. Mg(2+) contacts are provided by aspartate 123 and lysine 124. At lysine 124 the chain carries N6-carboxylysine. Cysteine 193 provides a ligand contact to [2Fe-2S] cluster. A Mg(2+)-binding site is contributed by glutamate 489. Serine 515 acts as the Proton acceptor in catalysis.

The protein belongs to the IlvD/Edd family. In terms of assembly, homodimer. It depends on [2Fe-2S] cluster as a cofactor. Requires Mg(2+) as cofactor.

It carries out the reaction (2R)-2,3-dihydroxy-3-methylbutanoate = 3-methyl-2-oxobutanoate + H2O. The enzyme catalyses (2R,3R)-2,3-dihydroxy-3-methylpentanoate = (S)-3-methyl-2-oxopentanoate + H2O. The protein operates within amino-acid biosynthesis; L-isoleucine biosynthesis; L-isoleucine from 2-oxobutanoate: step 3/4. Its pathway is amino-acid biosynthesis; L-valine biosynthesis; L-valine from pyruvate: step 3/4. Functions in the biosynthesis of branched-chain amino acids. Catalyzes the dehydration of (2R,3R)-2,3-dihydroxy-3-methylpentanoate (2,3-dihydroxy-3-methylvalerate) into 2-oxo-3-methylpentanoate (2-oxo-3-methylvalerate) and of (2R)-2,3-dihydroxy-3-methylbutanoate (2,3-dihydroxyisovalerate) into 2-oxo-3-methylbutanoate (2-oxoisovalerate), the penultimate precursor to L-isoleucine and L-valine, respectively. The sequence is that of Dihydroxy-acid dehydratase from Xanthomonas axonopodis pv. citri (strain 306).